Consider the following 253-residue polypeptide: Glucosamine-6-phosphate deaminase (253 aa).

Aspartate 65 functions as the Proton acceptor; for enolization step in the catalytic mechanism. Catalysis depends on asparagine 133, which acts as the For ring-opening step. Histidine 135 functions as the Proton acceptor; for ring-opening step in the catalytic mechanism. Residue glutamate 140 is the For ring-opening step of the active site.

It belongs to the glucosamine/galactosamine-6-phosphate isomerase family. NagB subfamily.

It carries out the reaction alpha-D-glucosamine 6-phosphate + H2O = beta-D-fructose 6-phosphate + NH4(+). Its pathway is amino-sugar metabolism; N-acetylneuraminate degradation; D-fructose 6-phosphate from N-acetylneuraminate: step 5/5. In terms of biological role, catalyzes the reversible isomerization-deamination of glucosamine 6-phosphate (GlcN6P) to form fructose 6-phosphate (Fru6P) and ammonium ion. This Corynebacterium glutamicum (strain R) protein is Glucosamine-6-phosphate deaminase.